We begin with the raw amino-acid sequence, 124 residues long: Cytochrome b5-like protein (124 aa).

A helical transmembrane segment spans residues 5–22; it reads YLLILIIIYVIKIICRYF. The Cytochrome b5 heme-binding domain occupies 49-124; sequence NQINQVNQVN…ILSKYKITEK (76 aa). 2 residues coordinate heme: histidine 84 and histidine 108.

It belongs to the cytochrome b5 family.

It is found in the membrane. Membrane bound hemoprotein which function as an electron carrier for several membrane bound oxygenases. The chain is Cytochrome b5-like protein from Acanthamoeba polyphaga (Amoeba).